The sequence spans 156 residues: Arginine repressor (156 aa).

Belongs to the ArgR family.

The protein resides in the cytoplasm. Its pathway is amino-acid biosynthesis; L-arginine biosynthesis [regulation]. In terms of biological role, regulates arginine biosynthesis genes. This is Arginine repressor from Sodalis glossinidius (strain morsitans).